The chain runs to 282 residues: Ribosomal protein L11 methyltransferase (282 aa).

S-adenosyl-L-methionine contacts are provided by threonine 133, glycine 154, aspartate 175, and asparagine 216.

This sequence belongs to the methyltransferase superfamily. PrmA family.

The protein resides in the cytoplasm. The catalysed reaction is L-lysyl-[protein] + 3 S-adenosyl-L-methionine = N(6),N(6),N(6)-trimethyl-L-lysyl-[protein] + 3 S-adenosyl-L-homocysteine + 3 H(+). Methylates ribosomal protein L11. This Campylobacter jejuni subsp. doylei (strain ATCC BAA-1458 / RM4099 / 269.97) protein is Ribosomal protein L11 methyltransferase.